Here is a 622-residue protein sequence, read N- to C-terminus: Probable potassium transport system protein Kup 2 (622 aa).

A run of 12 helical transmembrane segments spans residues 9 to 29, 46 to 66, 99 to 119, 137 to 157, 169 to 189, 213 to 233, 247 to 267, 285 to 305, 337 to 357, 363 to 383, 396 to 416, and 419 to 439; these read LSGV…TSPL, PASI…VVSV, TPLL…EVVI, PSLD…LFAI, FAPI…NSIF, ASFF…ALYA, WFMV…ALLL, ALLP…QAVI, IYIP…IMSF, LAAA…ILSC, LVAA…AANL, and IFSG…VMTS.

Belongs to the HAK/KUP transporter (TC 2.A.72) family.

Its subcellular location is the cell inner membrane. It carries out the reaction K(+)(in) + H(+)(in) = K(+)(out) + H(+)(out). Its function is as follows. Transport of potassium into the cell. Likely operates as a K(+):H(+) symporter. The sequence is that of Probable potassium transport system protein Kup 2 from Aeromonas hydrophila subsp. hydrophila (strain ATCC 7966 / DSM 30187 / BCRC 13018 / CCUG 14551 / JCM 1027 / KCTC 2358 / NCIMB 9240 / NCTC 8049).